A 152-amino-acid polypeptide reads, in one-letter code: MLDKIDRKLLALLQQDCTLSLQALAEAVNLTTTPCWKRLKRLEDDGILIGKVALLDPEKIGLGLTAFVLIKTQHHSSEWYCRFVTVVTEMPEVLGFWRMAGEYDYLMRVQVADMKRYDEFYKRLVNSVPGLSDVTSSFAMEQIKYTTSLPIE.

In terms of domain architecture, HTH asnC-type spans 2 to 63 (LDKIDRKLLA…LLDPEKIGLG (62 aa)). Positions 21–40 (LQALAEAVNLTTTPCWKRLK) form a DNA-binding region, H-T-H motif.

Plays a role in L-cysteine detoxification. Binds to the dlsT(yhaO)-yhaM operon promoter in the presence but not absence of L-cysteine; activates transcription from the dlsT(yhaO)-yhaM operon. The sequence is that of DNA-binding transcriptional activator DecR (decR) from Escherichia coli O157:H7.